Consider the following 333-residue polypeptide: MATISSTLLLNSSRSALPLRFPKFSGFSSSSPFARSYRFGRRNLEPLSNGMLSSGSRADGATAAAASMEGVMTEAMKLIQSASPTWKSAVANNLLIFVLGSPLLVTGLSASGIAAAFLLGTLTWRAYGSAGFLLVAAYFVIGTAATKVKMTQKEAQGVAEKRKGRRGPRSVIGSSAAGCVCAFLSIYQVGGAAFSQLFRLGFVSSFCTKVSDTVSSEIGKAYGKTTYLATTFKIVPRGTEGAMSLEGTLAGLLASFFLASVGCFLGQITPPEAAVCVLASQIANLGESIIGASFQDKEGFKWLNNDVVNVINISLGSIVAILMQQFILQNWVK.

The transit peptide at 1-65 (MATISSTLLL…SRADGATAAA (65 aa)) directs the protein to the chloroplast. 6 helical membrane-spanning segments follow: residues 94–114 (LLIF…SGIA), 126–146 (AYGS…TAAT), 171–191 (VIGS…QVGG), 248–268 (TLAG…LGQI), 274–294 (AVCV…GASF), and 307–327 (VVNV…QQFI).

Belongs to the TMEM19 family.

Its subcellular location is the plastid. The protein localises to the chloroplast membrane. The enzyme catalyses phytyl phosphate + a ribonucleoside 5'-triphosphate = phytyl diphosphate + a ribonucleoside 5'-diphosphate. The catalysed reaction is phytyl phosphate + CTP = phytyl diphosphate + CDP. It functions in the pathway cofactor biosynthesis; tocopherol biosynthesis. Its function is as follows. Phytyl-phosphate kinase catalyzing the conversion of phytyl-monophosphate to phytyl-diphosphate. Involved in the activation and reutilization of phytol from chlorophyll degradation in plant metabolism, including tocopherol (vitamin E) biosynthesis. Involved in the biosynthesis of phylloquinone (vitamin K), which is required for the photosystem I (PSI) complex stability. The protein is Protein VTE6, chloroplastic of Arabidopsis thaliana (Mouse-ear cress).